Reading from the N-terminus, the 527-residue chain is Bifunctional purine biosynthesis protein PurH (527 aa).

An MGS-like domain is found at 1–144 (MNRRALISVS…KNHESVAIIV (144 aa)).

The protein belongs to the PurH family.

It catalyses the reaction (6R)-10-formyltetrahydrofolate + 5-amino-1-(5-phospho-beta-D-ribosyl)imidazole-4-carboxamide = 5-formamido-1-(5-phospho-D-ribosyl)imidazole-4-carboxamide + (6S)-5,6,7,8-tetrahydrofolate. It carries out the reaction IMP + H2O = 5-formamido-1-(5-phospho-D-ribosyl)imidazole-4-carboxamide. It participates in purine metabolism; IMP biosynthesis via de novo pathway; 5-formamido-1-(5-phospho-D-ribosyl)imidazole-4-carboxamide from 5-amino-1-(5-phospho-D-ribosyl)imidazole-4-carboxamide (10-formyl THF route): step 1/1. Its pathway is purine metabolism; IMP biosynthesis via de novo pathway; IMP from 5-formamido-1-(5-phospho-D-ribosyl)imidazole-4-carboxamide: step 1/1. This Heliobacterium modesticaldum (strain ATCC 51547 / Ice1) protein is Bifunctional purine biosynthesis protein PurH.